Reading from the N-terminus, the 1088-residue chain is PAN2-PAN3 deadenylation complex catalytic subunit pan2 (1088 aa).

WD repeat units follow at residues 16–56 (VSTC…YTQF), 136–175 (HKDK…PVNK), 178–224 (AHTG…SLVP), and 270–309 (PLTS…SFSD). A linker region spans residues 309 to 443 (DLKLPIQLPN…EDTISGPDSI (135 aa)). The USP domain maps to 443–814 (IPKFYQRPVI…IPIIVYYEKL (372 aa)). Residues 860–1033 (VGIDSEFVAL…EDALTALKLY (174 aa)) form the Exonuclease domain. Positions 863, 865, 972, and 1025 each coordinate a divalent metal cation.

Belongs to the peptidase C19 family. PAN2 subfamily. Forms a heterotrimer with an asymmetric homodimer of the regulatory subunit ppk26/pan3 to form the poly(A)-nuclease (PAN) deadenylation complex. Requires a divalent metal cation as cofactor.

The protein localises to the cytoplasm. It catalyses the reaction Exonucleolytic cleavage of poly(A) to 5'-AMP.. Positively regulated by the regulatory subunit ppk26/pan3. Catalytic subunit of the poly(A)-nuclease (PAN) deadenylation complex, one of two cytoplasmic mRNA deadenylases involved in mRNA turnover. PAN specifically shortens poly(A) tails of RNA and the activity is stimulated by poly(A)-binding protein pab1. PAN deadenylation is followed by rapid degradation of the shortened mRNA tails by the CCR4-NOT complex. Deadenylated mRNAs are then degraded by two alternative mechanisms, namely exosome-mediated 3'-5' exonucleolytic degradation, or deadenylation-dependent mRNA decaping and subsequent 5'-3' exonucleolytic degradation by xrn1. May also be involved in post-transcriptional maturation of mRNA poly(A) tails. The protein is PAN2-PAN3 deadenylation complex catalytic subunit pan2 of Schizosaccharomyces pombe (strain 972 / ATCC 24843) (Fission yeast).